The sequence spans 159 residues: Transmembrane protein 42 (159 aa).

4 consecutive transmembrane segments (helical) span residues 37–57 (FWGV…AASA), 68–88 (GFCV…WTFF), 100–120 (IASV…GFVL), and 124–144 (CQEV…TLIH).

It localises to the membrane. This Bos taurus (Bovine) protein is Transmembrane protein 42 (TMEM42).